Consider the following 216-residue polypeptide: Large ribosomal subunit protein bL25 (216 aa).

Residues 191-216 are disordered; sequence LVSAESEEDEDAPAADEVPATEVSEE. Residues 195 to 204 show a composition bias toward acidic residues; that stretch reads ESEEDEDAPA.

This sequence belongs to the bacterial ribosomal protein bL25 family. CTC subfamily. In terms of assembly, part of the 50S ribosomal subunit; part of the 5S rRNA/L5/L18/L25 subcomplex. Contacts the 5S rRNA. Binds to the 5S rRNA independently of L5 and L18.

In terms of biological role, this is one of the proteins that binds to the 5S RNA in the ribosome where it forms part of the central protuberance. The chain is Large ribosomal subunit protein bL25 from Jannaschia sp. (strain CCS1).